The following is a 593-amino-acid chain: RNA-binding protein 47 (593 aa).

Residues 1–20 (MTAEDSTAAMSSDSAAGSSA) show a composition bias toward low complexity. Positions 1–25 (MTAEDSTAAMSSDSAAGSSAKVPEG) are disordered. RRM domains follow at residues 71–149 (CEVF…CSVD), 151–233 (CRLF…WAEP), and 246–318 (KILY…LAKP). R332 is modified (omega-N-methylarginine). Asymmetric dimethylarginine; alternate is present on residues R394 and R405. R394 and R405 each carry omega-N-methylarginine; alternate.

It belongs to the RRM RBM47 family. As to quaternary structure, homodimer. Interacts with A1CF. Interacts with APOBEC1; form an mRNA editing complex. Interacts with RBPMS.

The protein resides in the nucleus. It localises to the cytoplasm. Its function is as follows. Single-stranded RNA-binding protein that functions in a variety of RNA processes, including alternative splicing, RNA stabilization, and RNA editing. Functions as an enzyme-substrate adapter for the cytidine deaminase APOBEC1. With APOBEC1 forms an mRNA editing complex involved into cytidine to uridine editing of a variety of mRNA molecules. Through the binding of their 3'UTR, also stabilizes a variety of mRNAs and regulates the expression of genes such as the interferon alpha/beta receptor and interleukin-10. Also involved in the alternative splicing of several genes including TJP1. Binds the pre-mRNA (U)GCAUG consensus sequences in downstream intronic regions of alternative exons, regulating their exclusion and inclusion into mRNAs. Independently of its RNA-binding activity, could negatively regulate MAVS by promoting its lysosomal degradation. In Homo sapiens (Human), this protein is RNA-binding protein 47.